We begin with the raw amino-acid sequence, 229 residues long: Coiled-coil domain-containing protein 134 (229 aa).

Positions 1–22 (MDLLQFLAFLFVLLLSGMGATG) are cleaved as a signal peptide. Asparagine 148 is a short sequence motif (prevents secretion from ER). Residue asparagine 148 is glycosylated (N-linked (GlcNAc...) asparagine). The disordered stretch occupies residues 193 to 229 (TDPFQKALREEEKRRKKEEKRKEIRKGPRISRSQSEL). Residues 196 to 218 (FQKALREEEKRRKKEEKRKEIRK) are a coiled coil. Positions 206 to 213 (RRKKEEKR) match the Nuclear localization signal motif.

The protein belongs to the CCDC134 family. As to quaternary structure, interacts with TADA2A. Associates with the PCAF complex via TADA2A binding. Post-translationally, O-glycosylated, with additional sialic acid modifications. In terms of tissue distribution, expressed in cervical gland, cervical squamous epithelium, endometrium, stomach, kidney distal convoluted tubule, spermatogenic cells in testis, mammary gland, liver and striated muscle (at protein level). Also detected in placenta. Highest expression in testis relative to other tissues. Detected in T cells and dendritic cells; highly expressed in activated CD8(+) T cells, and also expressed at lower levels in CD4(+) T cells.

The protein localises to the endoplasmic reticulum lumen. It is found in the secreted. Its subcellular location is the cytoplasm. The protein resides in the nucleus. Molecular adapter required to prevent protein hyperglycosylation of HSP90B1: during translation, associates with nascent HSP90B1 and the STT3A catalytic component of the OST-A complex and tethers them to a specialized translocon that forms a microenvironment for HSP90B1 folding. In the CCDC134-containing translocon, STT3A associates with the SRT pseudosubstrate motif of HSP90B1, preventing access to facultative glycosylation sites until folding is completed, preventing hyperglycosylation and subsequent degradation of HSP90B1. In extracellular secreted form, promotes proliferation and activation of CD8(+) T-cells, suggesting a cytokine-like function. May inhibit ERK and JNK signaling activity. May suppress cell migration and invasion activity, via its effects on ERK and JNK signaling. May also localize in the nucleus: enhances stability of the PCAF histone acetyltransferase (HAT) complex member TADA2A and thus promotes PCAF-mediated histone acetyltransferase activity. Has a critical role in the regulation of osteogenesis and bone development. The sequence is that of Coiled-coil domain-containing protein 134 from Homo sapiens (Human).